The chain runs to 163 residues: UPF0478 protein SERP1299 (163 aa).

Residues 7 to 27 (IAGIIAAIAFLILCIGIVVVL) traverse the membrane as a helical segment.

This sequence belongs to the UPF0478 family.

It localises to the cell membrane. The chain is UPF0478 protein SERP1299 from Staphylococcus epidermidis (strain ATCC 35984 / DSM 28319 / BCRC 17069 / CCUG 31568 / BM 3577 / RP62A).